The sequence spans 290 residues: Membrane protein insertase YidC (290 aa).

Positions 1–19 are cleaved as a signal peptide; sequence MKKKTLLPLFLGIMVFLAG. C20 is lipidated: N-palmitoyl cysteine. Residue C20 is the site of S-diacylglycerol cysteine attachment. Helical transmembrane passes span 56–76, 134–154, 176–196, 207–224, and 229–251; these read YGLA…PFML, MLGC…YFVL, PDIW…YVSS, GYMM…ISLS, and LGLY…NIYY. Residues 270–290 form a disordered region; that stretch reads HNGGSNKKGKNTQVVSKKKKK.

It belongs to the OXA1/ALB3/YidC family. Type 2 subfamily.

Its subcellular location is the cell membrane. Its function is as follows. Required for the insertion and/or proper folding and/or complex formation of integral membrane proteins into the membrane. Involved in integration of membrane proteins that insert both dependently and independently of the Sec translocase complex, as well as at least some lipoproteins. The chain is Membrane protein insertase YidC from Staphylococcus aureus (strain MRSA252).